Here is a 155-residue protein sequence, read N- to C-terminus: Protein-export protein SecB (155 aa).

This sequence belongs to the SecB family. As to quaternary structure, homotetramer, a dimer of dimers. One homotetramer interacts with 1 SecA dimer.

The protein resides in the cytoplasm. In terms of biological role, one of the proteins required for the normal export of preproteins out of the cell cytoplasm. It is a molecular chaperone that binds to a subset of precursor proteins, maintaining them in a translocation-competent state. It also specifically binds to its receptor SecA. The chain is Protein-export protein SecB from Escherichia fergusonii (strain ATCC 35469 / DSM 13698 / CCUG 18766 / IAM 14443 / JCM 21226 / LMG 7866 / NBRC 102419 / NCTC 12128 / CDC 0568-73).